Consider the following 167-residue polypeptide: Ubiquitin-fold modifier-conjugating enzyme 1 (167 aa).

Catalysis depends on cysteine 116, which acts as the Glycyl thioester intermediate.

It belongs to the ubiquitin-conjugating enzyme family. UFC1 subfamily. In terms of assembly, interacts with UBA5 (via C-terminus). Interacts with UFL1. Interacts with UFM1.

Its function is as follows. E2-like enzyme which specifically catalyzes the second step in ufmylation. Accepts the ubiquitin-like modifier UFM1 from the E1 enzyme UBA5 and forms an intermediate with UFM1 via a thioester linkage. Ufmylation is involved in various processes, such as ribosome recycling, response to DNA damage, interferon response or reticulophagy (also called ER-phagy). This Salmo salar (Atlantic salmon) protein is Ubiquitin-fold modifier-conjugating enzyme 1.